The sequence spans 281 residues: Proteasome subunit beta 2 (281 aa).

The propeptide at 1 to 53 (MEANTRSTGRLPAAFLTPGSSSFMDFLSEHQPEILPGNRQLPPTQGVIEAPHG) is removed in mature form; by autocatalysis. Thr-54 acts as the Nucleophile in catalysis.

It belongs to the peptidase T1B family. The 20S proteasome core is composed of 14 alpha and 14 beta subunits that assemble into four stacked heptameric rings, resulting in a barrel-shaped structure. The two inner rings, each composed of seven catalytic beta subunits, are sandwiched by two outer rings, each composed of seven alpha subunits. The catalytic chamber with the active sites is on the inside of the barrel. Has a gated structure, the ends of the cylinder being occluded by the N-termini of the alpha-subunits. Is capped by the proteasome-associated ATPase, ARC.

It is found in the cytoplasm. The catalysed reaction is Cleavage of peptide bonds with very broad specificity.. Its pathway is protein degradation; proteasomal Pup-dependent pathway. Its activity is regulated as follows. The formation of the proteasomal ATPase ARC-20S proteasome complex, likely via the docking of the C-termini of ARC into the intersubunit pockets in the alpha-rings, may trigger opening of the gate for substrate entry. Interconversion between the open-gate and close-gate conformations leads to a dynamic regulation of the 20S proteasome proteolysis activity. Functionally, component of the proteasome core, a large protease complex with broad specificity involved in protein degradation. The protein is Proteasome subunit beta 2 of Streptomyces avermitilis (strain ATCC 31267 / DSM 46492 / JCM 5070 / NBRC 14893 / NCIMB 12804 / NRRL 8165 / MA-4680).